A 565-amino-acid chain; its full sequence is Dihydroxy-acid dehydratase (565 aa).

Position 80 (Asp-80) interacts with Mg(2+). Cys-121 contacts [2Fe-2S] cluster. Mg(2+) is bound by residues Asp-122 and Lys-123. N6-carboxylysine is present on Lys-123. Cys-194 lines the [2Fe-2S] cluster pocket. Glu-447 contributes to the Mg(2+) binding site. The active-site Proton acceptor is Ser-473.

Belongs to the IlvD/Edd family. In terms of assembly, homodimer. The cofactor is [2Fe-2S] cluster. Mg(2+) is required as a cofactor.

The enzyme catalyses (2R)-2,3-dihydroxy-3-methylbutanoate = 3-methyl-2-oxobutanoate + H2O. It carries out the reaction (2R,3R)-2,3-dihydroxy-3-methylpentanoate = (S)-3-methyl-2-oxopentanoate + H2O. It functions in the pathway amino-acid biosynthesis; L-isoleucine biosynthesis; L-isoleucine from 2-oxobutanoate: step 3/4. Its pathway is amino-acid biosynthesis; L-valine biosynthesis; L-valine from pyruvate: step 3/4. Functions in the biosynthesis of branched-chain amino acids. Catalyzes the dehydration of (2R,3R)-2,3-dihydroxy-3-methylpentanoate (2,3-dihydroxy-3-methylvalerate) into 2-oxo-3-methylpentanoate (2-oxo-3-methylvalerate) and of (2R)-2,3-dihydroxy-3-methylbutanoate (2,3-dihydroxyisovalerate) into 2-oxo-3-methylbutanoate (2-oxoisovalerate), the penultimate precursor to L-isoleucine and L-valine, respectively. In Pelodictyon phaeoclathratiforme (strain DSM 5477 / BU-1), this protein is Dihydroxy-acid dehydratase.